We begin with the raw amino-acid sequence, 312 residues long: Putative clathrin assembly protein At2g01920 (312 aa).

In terms of domain architecture, ENTH spans 21–152 (LITATDEKFT…ILYYNKNMIR (132 aa)).

The protein resides in the membrane. Its subcellular location is the clathrin-coated pit. It localises to the golgi apparatus. It is found in the cytoplasmic vesicle. The protein localises to the clathrin-coated vesicle. This Arabidopsis thaliana (Mouse-ear cress) protein is Putative clathrin assembly protein At2g01920.